Here is a 185-residue protein sequence, read N- to C-terminus: Cbp/p300-interacting transactivator 4 (185 aa).

2 disordered regions span residues 15–64 (PRPP…VAYG) and 95–130 (YPGR…AHAL). Pro residues predominate over residues 103 to 125 (PGAPGGPSGPQPAPGAPAPPLQP).

It belongs to the CITED family. In terms of assembly, interacts via its C-terminal region with the CH1 domain of CREBBP and EP300. Interacts with all TFAP2/AP-2 isoforms.

The protein resides in the nucleus. It is found in the cytoplasm. Its function is as follows. Acts as a transcriptional coactivator for TFAP2/AP-2. Enhances estrogen-dependent transactivation mediated by estrogen receptors. May function as an inhibitor of transactivation by HIF1A by disrupting HIF1A interaction with CREBBP. May be involved in regulation of gene expression during development and differentiation of blood cells, endothelial cells and mammary epithelial cells. This chain is Cbp/p300-interacting transactivator 4 (CITED4), found in Bos taurus (Bovine).